We begin with the raw amino-acid sequence, 298 residues long: Baseplate tube protein p140 (298 aa).

Homotrimer. Forms a pseudo-hexameric ring. Interacts with collar protein p132, DTP-pb9 and tail tube protein pb6.

Its subcellular location is the virion. Forms the simplified baseplate, together with the p132 collar protein ring and the cone (DTP-pb9 and BHP-pb3). This is Baseplate tube protein p140 from Escherichia phage T5 (Enterobacteria phage T5).